A 95-amino-acid chain; its full sequence is Embryonic abundant protein 1 (95 aa).

Positions 1-10 (MASGQQQQGR) are enriched in polar residues. A disordered region spans residues 1-95 (MASGQQQQGR…IDESKYKTKS (95 aa)). 2 stretches are compositionally biased toward basic and acidic residues: residues 40 to 64 (AEGRSRGGQTRKEQMGEEGYREMGR) and 75 to 95 (GGERAAREGIDIDESKYKTKS).

The protein belongs to the small hydrophilic plant seed protein family. As to expression, expressed in dry seeds and immature embryos.

In terms of biological role, em protein may act as a cytoplasm protectant during desiccation. This Oryza sativa subsp. japonica (Rice) protein is Embryonic abundant protein 1 (EMP1).